A 524-amino-acid polypeptide reads, in one-letter code: Thioredoxin reductase 2, mitochondrial (524 aa).

The transit peptide at 1-36 (MAAMAVALRGLGGRFRWRTQAVAGGVRGAARGAAAG) directs the protein to the mitochondrion. 41 to 70 (DLLVVGGGSGGLACAKEAAQLGRKVAVVDY) serves as a coordination point for FAD. A disulfide bridge links cysteine 86 with cysteine 91. Residues lysine 175 and lysine 329 each carry the N6-succinyllysine modification. Histidine 497 functions as the Proton acceptor in the catalytic mechanism. The cysteinyl-selenocysteine (Cys-Sec) cross-link spans 522 to 523 (CU). A non-standard amino acid (selenocysteine) is located at residue selenocysteine 523.

The protein belongs to the class-I pyridine nucleotide-disulfide oxidoreductase family. Homodimer. FAD serves as cofactor. In terms of tissue distribution, highly expressed in the prostate, ovary, liver, testis, uterus, colon and small intestine. Intermediate levels in brain, skeletal muscle, heart and spleen. Low levels in placenta, pancreas, thymus and peripheral blood leukocytes. According to PubMed:10608886, high levels in kidney, whereas according to PubMed:9923614, levels are low. High expression is observed in the adrenal cortex.

It is found in the mitochondrion. The catalysed reaction is [thioredoxin]-dithiol + NADP(+) = [thioredoxin]-disulfide + NADPH + H(+). Its function is as follows. Involved in the control of reactive oxygen species levels and the regulation of mitochondrial redox homeostasis. Maintains thioredoxin in a reduced state. May play a role in redox-regulated cell signaling. This is Thioredoxin reductase 2, mitochondrial from Homo sapiens (Human).